The primary structure comprises 1738 residues: Complement C4-B (1738 aa).

The signal sequence occupies residues 1-19 (MRLLWGLAWVFSFCASSLQ). Cys66 and Cys95 are disulfide-bonded. The N-linked (GlcNAc...) asparagine glycan is linked to Asn224. The cysteines at positions 633 and 667 are disulfide-linked. The propeptide occupies 674-677 (RQKR). Intrachain disulfides connect Cys700-Cys726, Cys701-Cys733, and Cys714-Cys734. Residues 700 to 734 (CCQDGMTKLPMKRTCEQRAARVPQQACREPFLSCC) form the Anaphylatoxin-like domain. Asn743 is a glycosylation site (N-linked (GlcNAc...) asparagine). Positions 1006-1009 (CAEQ) form a cross-link, isoglutamyl cysteine thioester (Cys-Gln). 2 N-linked (GlcNAc...) asparagine glycosylation sites follow: Asn1324 and Asn1387. A sulfotyrosine mark is found at Tyr1413, Tyr1416, and Tyr1417. A propeptide spanning residues 1444 to 1447 (RRRR) is cleaved from the precursor. 5 cysteine pairs are disulfide-bonded: Cys1465–Cys1529, Cys1577–Cys1582, Cys1589–Cys1667, Cys1612–Cys1736, and Cys1712–Cys1721. One can recognise an NTR domain in the interval 1589–1736 (CPRLLRSLER…FLMEFSSRGC (148 aa)).

In absence of complement activation, circulates in blood as a disulfide-linked trimer of an alpha, beta and gamma chain. As to quaternary structure, complement C4b is composed of complement C4b-A, complement C4 beta and complement C4 gamma chains that are associated via disulfide bonds. Non-enzymatic component of the C3 convertase, also named C4bC2b, composed of the serine protease complement C2b (C2), as well as complement C4b. Non-enzymatic component of the C5 convertase, also named C4bC2bC3b, composed of the serine protease complement C2b (C2), complement C3b, as well as complement C4b. Prior to secretion, the single-chain precursor is enzymatically cleaved by plasminogen (PLG) to yield non-identical chains alpha, beta and gamma. During activation of the complement systems, the alpha chain is cleaved into C4a and C4b by different proteases depending on the complement pathway: C4b stays linked to the beta and gamma chains, while C4a is released in the plasma. The alpha chain is cleaved by C1S to generate C4a and C4b following activation by the classical complement system. The alpha chain is cleaved to generate C4a and C4b by MASP2 following activation by the lectin complement system. The alpha chain is cleaved by GZMK to generate C4a and C4b following activation by the GZMK complement system. Further degradation of C4b by C1 into the inactive fragments C4c and C4d blocks the generation of C3 convertase. The proteolytic cleavages often are incomplete so that many structural forms can be found in plasma. Post-translationally, upon activation, the internal thioester bond reacts with carbohydrate antigens on the target surface to form amide or ester bonds, leading to covalent association with the surface of pathogens. In terms of processing, complement C4b interacts with complement C3b via a thioester linkage.

It localises to the secreted. Its subcellular location is the cell surface. Functionally, precursor of non-enzymatic components of the classical, lectin and GZMK complement pathways, which consist in a cascade of proteins that leads to phagocytosis and breakdown of pathogens and signaling that strengthens the adaptive immune system. Its function is as follows. Non-enzymatic component of C3 and C5 convertases. Generated following cleavage by complement proteases (C1S, MASP2 or GZMK, depending on the complement pathway), it covalently attaches to the surface of pathogens, where it acts as an opsonin that marks the surface of antigens for removal. It then recruits the serine protease complement C2b to form the C3 and C5 convertases, which cleave and activate C3 and C5, respectively, the next components of the complement pathways. Complement C4b-A isotype is responsible for effective binding to form amide bonds with immune aggregates or protein antigens, while complement C4b-B isotype catalyzes the transacylation of the thioester carbonyl group to form ester bonds with carbohydrate antigens. In terms of biological role, putative humoral mediator released following cleavage by complement proteases (C1S, MASP2 or GZMK, depending on the complement pathway). While it is strongly similar to anaphylatoxins, its role is unclear. Was reported to act as a mediator of local inflammatory process; however these effects were probably due to contamination with C3a and/C5a anaphylatoxins in biological assays. In Mus musculus (Mouse), this protein is Complement C4-B.